The sequence spans 177 residues: Apoptosis regulatory protein Siva (177 aa).

Phosphotyrosine; by ABL2 is present on tyrosine 34. The segment at 36–55 (REVFERTKQLLFQGAQAYRD) is interaction with BCL2L1 isoform Bcl-x(L) and inhibition of BCL2L1 anti-apoptotic activity.

As to quaternary structure, binds through its N-terminal region to the C-terminus of CD27 and to PXMP2/PMP22. Binds to the C-terminus of TNFRSF18/GITR. Binds to BCL2L1/BCLX isoform Bcl-x(L) but not to BAX. Zn(2+) serves as cofactor. In post-ischemic kidney, found in cells lining the S3 segment of proximal tubules at 12 hours and 1 day post-ischemia. At five and seven days post-ischemia, found in epithelial cells of papillary proliferations in regenerating tubules.

The protein localises to the cytoplasm. Its subcellular location is the nucleus. Induces CD27-mediated apoptosis. Inhibits BCL2L1 isoform Bcl-x(L) anti-apoptotic activity. Inhibits activation of NF-kappa-B and promotes T-cell receptor-mediated apoptosis. In Rattus norvegicus (Rat), this protein is Apoptosis regulatory protein Siva (Siva1).